The sequence spans 654 residues: RNA polymerase I-specific transcription initiation factor tif-1A (654 aa).

The disordered stretch occupies residues Met1–Ala37. Over residues Pro13–Lys31 the composition is skewed to basic and acidic residues.

It belongs to the RRN3 family.

Its subcellular location is the nucleus. The protein localises to the nucleolus. Its function is as follows. Required for efficient transcription initiation by RNA polymerase I (Pol I). This Caenorhabditis elegans protein is RNA polymerase I-specific transcription initiation factor tif-1A.